Consider the following 89-residue polypeptide: Extender of the chronological lifespan protein ecl3 (89 aa).

Belongs to the ecl1 family.

The protein resides in the nucleus. Functionally, involved in chronological cell aging. The protein is Extender of the chronological lifespan protein ecl3 (ecl3) of Schizosaccharomyces pombe (strain 972 / ATCC 24843) (Fission yeast).